Consider the following 180-residue polypeptide: Ribulose bisphosphate carboxylase small subunit 1A, chloroplastic (180 aa).

A chloroplast-targeting transit peptide spans 1-54 (MASSMLSSATMVASPAQATMVAPFNGLKSSAAFPATRKANNDITSITSNGGRVN). S113 carries the phosphoserine modification.

It belongs to the RuBisCO small chain family. Heterohexadecamer of 8 large and 8 small subunits.

The protein localises to the plastid. It localises to the chloroplast membrane. Its subcellular location is the chloroplast stroma. Functionally, ruBisCO catalyzes two reactions: the carboxylation of D-ribulose 1,5-bisphosphate, the primary event in carbon dioxide fixation, as well as the oxidative fragmentation of the pentose substrate. Both reactions occur simultaneously and in competition at the same active site. Although the small subunit is not catalytic it is essential for maximal activity. This is Ribulose bisphosphate carboxylase small subunit 1A, chloroplastic (RBCS-1A) from Arabidopsis thaliana (Mouse-ear cress).